Here is a 164-residue protein sequence, read N- to C-terminus: Ribosome maturation factor RimM (164 aa).

A PRC barrel domain is found at 90–161 (KGSYFIADLI…TVTIKPLEIW (72 aa)).

This sequence belongs to the RimM family. In terms of assembly, binds ribosomal protein uS19.

The protein resides in the cytoplasm. Functionally, an accessory protein needed during the final step in the assembly of 30S ribosomal subunit, possibly for assembly of the head region. Essential for efficient processing of 16S rRNA. May be needed both before and after RbfA during the maturation of 16S rRNA. It has affinity for free ribosomal 30S subunits but not for 70S ribosomes. The chain is Ribosome maturation factor RimM from Clostridium botulinum (strain ATCC 19397 / Type A).